The chain runs to 417 residues: Serine hydroxymethyltransferase (417 aa).

Residues L121 and 125–127 (GHL) contribute to the (6S)-5,6,7,8-tetrahydrofolate site. K229 is modified (N6-(pyridoxal phosphate)lysine). 355–357 (SPF) contacts (6S)-5,6,7,8-tetrahydrofolate.

This sequence belongs to the SHMT family. Homodimer. It depends on pyridoxal 5'-phosphate as a cofactor.

It is found in the cytoplasm. The catalysed reaction is (6R)-5,10-methylene-5,6,7,8-tetrahydrofolate + glycine + H2O = (6S)-5,6,7,8-tetrahydrofolate + L-serine. It participates in one-carbon metabolism; tetrahydrofolate interconversion. Its pathway is amino-acid biosynthesis; glycine biosynthesis; glycine from L-serine: step 1/1. Catalyzes the reversible interconversion of serine and glycine with tetrahydrofolate (THF) serving as the one-carbon carrier. This reaction serves as the major source of one-carbon groups required for the biosynthesis of purines, thymidylate, methionine, and other important biomolecules. Also exhibits THF-independent aldolase activity toward beta-hydroxyamino acids, producing glycine and aldehydes, via a retro-aldol mechanism. The protein is Serine hydroxymethyltransferase of Enterobacter sp. (strain 638).